Here is a 121-residue protein sequence, read N- to C-terminus: DNA-directed RNA polymerase subunit omega (121 aa).

It belongs to the RNA polymerase subunit omega family. In terms of assembly, the RNAP catalytic core consists of 2 alpha, 1 beta, 1 beta' and 1 omega subunit. When a sigma factor is associated with the core the holoenzyme is formed, which can initiate transcription.

It catalyses the reaction RNA(n) + a ribonucleoside 5'-triphosphate = RNA(n+1) + diphosphate. Promotes RNA polymerase assembly. Latches the N- and C-terminal regions of the beta' subunit thereby facilitating its interaction with the beta and alpha subunits. The protein is DNA-directed RNA polymerase subunit omega of Syntrophobacter fumaroxidans (strain DSM 10017 / MPOB).